The primary structure comprises 57 residues: UPF0391 membrane protein bsl5717 (57 aa).

2 helical membrane passes run 6–26 (WALI…TGIS) and 35–55 (FLFY…LTIF).

It belongs to the UPF0391 family.

It is found in the cell membrane. This Bradyrhizobium diazoefficiens (strain JCM 10833 / BCRC 13528 / IAM 13628 / NBRC 14792 / USDA 110) protein is UPF0391 membrane protein bsl5717.